Here is a 439-residue protein sequence, read N- to C-terminus: Xylose isomerase (439 aa).

Residues His101 and Asp104 contribute to the active site. Glu232, Glu268, His271, Asp296, Asp307, Asp309, and Asp339 together coordinate Mg(2+).

Belongs to the xylose isomerase family. In terms of assembly, homotetramer. Mg(2+) is required as a cofactor.

It localises to the cytoplasm. It carries out the reaction alpha-D-xylose = alpha-D-xylulofuranose. This chain is Xylose isomerase, found in Yersinia enterocolitica serotype O:8 / biotype 1B (strain NCTC 13174 / 8081).